The sequence spans 311 residues: Probable deoxyhypusine synthase (311 aa).

Residue K284 is the Nucleophile of the active site.

The protein belongs to the deoxyhypusine synthase family. NAD(+) is required as a cofactor.

It catalyses the reaction [eIF5A protein]-L-lysine + spermidine = [eIF5A protein]-deoxyhypusine + propane-1,3-diamine. The protein operates within protein modification; eIF5A hypusination. Catalyzes the NAD-dependent oxidative cleavage of spermidine and the subsequent transfer of the butylamine moiety of spermidine to the epsilon-amino group of a specific lysine residue of the eIF-5A precursor protein to form the intermediate deoxyhypusine residue. The polypeptide is Probable deoxyhypusine synthase (Picrophilus torridus (strain ATCC 700027 / DSM 9790 / JCM 10055 / NBRC 100828 / KAW 2/3)).